The sequence spans 124 residues: 14 kDa peptide of ubiquinol-cytochrome c2 oxidoreductase complex (124 aa).

A helical transmembrane segment spans residues 85–102 (LGGFASGALLALALAGIF).

It is found in the cell inner membrane. Component of the ubiquinol-cytochrome c reductase complex (complex III or cytochrome b-c1 complex), which is a respiratory chain that generates an electrochemical potential coupled to ATP synthesis. This is 14 kDa peptide of ubiquinol-cytochrome c2 oxidoreductase complex from Cereibacter sphaeroides (Rhodobacter sphaeroides).